The chain runs to 73 residues: Large ribosomal subunit protein bL31 (73 aa).

This sequence belongs to the bacterial ribosomal protein bL31 family. Type A subfamily. As to quaternary structure, part of the 50S ribosomal subunit.

Functionally, binds the 23S rRNA. The sequence is that of Large ribosomal subunit protein bL31 from Ruegeria sp. (strain TM1040) (Silicibacter sp.).